The primary structure comprises 254 residues: Proteasome subunit alpha type-7 (254 aa).

Ser136 carries an O-linked (GlcNAc) serine glycan. Tyr159 carries the post-translational modification Phosphotyrosine. At Lys233 the chain carries N6-acetyllysine.

The protein belongs to the peptidase T1A family. As to quaternary structure, the 26S proteasome consists of a 20S proteasome core and two 19S regulatory subunits. The 20S proteasome core is a barrel-shaped complex made of 28 subunits that are arranged in four stacked rings. The two outer rings are each formed by seven alpha subunits, and the two inner rings are formed by seven beta subunits. The proteolytic activity is exerted by three beta-subunits PSMB5, PSMB6 and PSMB7. PSMA7 interacts directly with the PSMG1-PSMG2 heterodimer which promotes 20S proteasome assembly. Interacts with HIF1A. Interacts with RAB7A. Interacts with PRKN. Interacts with ABL1 and ABL2. Interacts with EMAP2. Interacts with MAVS. Ubiquitous.

It localises to the cytoplasm. The protein resides in the nucleus. In terms of biological role, component of the 20S core proteasome complex involved in the proteolytic degradation of most intracellular proteins. This complex plays numerous essential roles within the cell by associating with different regulatory particles. Associated with two 19S regulatory particles, forms the 26S proteasome and thus participates in the ATP-dependent degradation of ubiquitinated proteins. The 26S proteasome plays a key role in the maintenance of protein homeostasis by removing misfolded or damaged proteins that could impair cellular functions, and by removing proteins whose functions are no longer required. Associated with the PA200 or PA28, the 20S proteasome mediates ubiquitin-independent protein degradation. This type of proteolysis is required in several pathways including spermatogenesis (20S-PA200 complex) or generation of a subset of MHC class I-presented antigenic peptides (20S-PA28 complex). Inhibits the transactivation function of HIF-1A under both normoxic and hypoxia-mimicking conditions. The interaction with EMAP2 increases the proteasome-mediated HIF-1A degradation under the hypoxic conditions. Plays a role in hepatitis C virus internal ribosome entry site-mediated translation. Mediates nuclear translocation of the androgen receptor (AR) and thereby enhances androgen-mediated transactivation. Promotes MAVS degradation and thereby negatively regulates MAVS-mediated innate immune response. The chain is Proteasome subunit alpha type-7 (Psma7) from Rattus norvegicus (Rat).